Consider the following 354-residue polypeptide: Decorin (354 aa).

The first 16 residues, 1–16, serve as a signal peptide directing secretion; the sequence is MKATLVLFLLAQVSWA. Residues 17-30 constitute a propeptide that is removed on maturation; it reads GPFEQRGLFDFMLE. Residue S34 is glycosylated (O-linked (Xyl...) (glycosaminoglycan) serine). Disulfide bonds link C49–C55 and C53–C62. LRR repeat units follow at residues 68 to 88, 89 to 112, 113 to 136, 137 to 157, 158 to 181, 182 to 207, 208 to 228, 229 to 252, 253 to 276, 277 to 299, 300 to 329, and 330 to 354; these read DKVP…NNKI, TEIK…NNKI, SKIS…KNHL, KELP…DNEI, TKLK…GNPL, KNSG…DTNI, TAIP…GNKI, AKVD…FNSI, TVVE…NNKL, LRVP…NNNI, SEVG…SNPV, and RYWQ…GNYK. N206 carries an N-linked (GlcNAc...) asparagine glycan. N-linked (GlcNAc...) asparagine glycosylation is found at N241, N257, and N298. A disulfide bridge connects residues C308 and C341.

This sequence belongs to the small leucine-rich proteoglycan (SLRP) family. SLRP class I subfamily. Binds to type I and type II collagen, fibronectin and TGF-beta. Forms a ternary complex with MFAP2 and ELN. Interacts with DPT. The attached glycosaminoglycan chain can be either chondroitin sulfate or dermatan sulfate depending upon the tissue of origin.

It is found in the secreted. The protein localises to the extracellular space. Its subcellular location is the extracellular matrix. In terms of biological role, may affect the rate of fibrils formation. May be implicated in the dilatation of the rat cervix. The sequence is that of Decorin (Dcn) from Rattus norvegicus (Rat).